Here is a 452-residue protein sequence, read N- to C-terminus: Minor capsid protein (452 aa).

2 stretches are compositionally biased toward basic and acidic residues: residues 219 to 236 (VDKP…KGKQ) and 247 to 258 (GKPDISKPGEKQ). A disordered region spans residues 219-258 (VDKPEDKPKPVFDDKGKQPTDTVPPVDNGKPDISKPGEKQ).

Belongs to the closteroviridae minor capsid protein family.

The protein resides in the virion. In terms of biological role, minor capsid protein that encapsidates the 5'-terminal portion of the viral genome. The chain is Minor capsid protein from Lettuce infectious yellows virus (isolate United States/92) (LIYV).